A 451-amino-acid polypeptide reads, in one-letter code: Tubulin alpha chain (451 aa).

Gln11 provides a ligand contact to GTP. N6-acetyllysine is present on Lys40. Positions 71, 144, 145, 179, 206, and 228 each coordinate GTP. Glu71 serves as a coordination point for Mg(2+). Glu254 is an active-site residue.

Belongs to the tubulin family. In terms of assembly, dimer of alpha and beta chains. A typical microtubule is a hollow water-filled tube with an outer diameter of 25 nm and an inner diameter of 15 nM. Alpha-beta heterodimers associate head-to-tail to form protofilaments running lengthwise along the microtubule wall with the beta-tubulin subunit facing the microtubule plus end conferring a structural polarity. Microtubules usually have 13 protofilaments but different protofilament numbers can be found in some organisms and specialized cells. Requires Mg(2+) as cofactor. Post-translationally, undergoes a tyrosination/detyrosination cycle, the cyclic removal and re-addition of a C-terminal tyrosine residue by the enzymes tubulin tyrosine carboxypeptidase (TTCP) and tubulin tyrosine ligase (TTL), respectively. In terms of processing, acetylation of alpha chains at Lys-40 stabilizes microtubules and affects affinity and processivity of microtubule motors. This modification has a role in multiple cellular functions, ranging from cell motility, cell cycle progression or cell differentiation to intracellular trafficking and signaling.

The protein localises to the cytoplasm. The protein resides in the cytoskeleton. It catalyses the reaction GTP + H2O = GDP + phosphate + H(+). Tubulin is the major constituent of microtubules, a cylinder consisting of laterally associated linear protofilaments composed of alpha- and beta-tubulin heterodimers. Microtubules grow by the addition of GTP-tubulin dimers to the microtubule end, where a stabilizing cap forms. Below the cap, tubulin dimers are in GDP-bound state, owing to GTPase activity of alpha-tubulin. The sequence is that of Tubulin alpha chain (TUBA) from Euglena gracilis.